Here is a 200-residue protein sequence, read N- to C-terminus: Recombination protein RecR (200 aa).

The segment at 60-75 adopts a C4-type zinc-finger fold; that stretch reads CVYCQALTEDDVCNIC. The region spanning 83-177 is the Toprim domain; that stretch reads TKLCIIESML…KISRIGFGVP (95 aa).

It belongs to the RecR family.

Functionally, may play a role in DNA repair. It seems to be involved in an RecBC-independent recombinational process of DNA repair. It may act with RecF and RecO. The protein is Recombination protein RecR of Francisella tularensis subsp. holarctica (strain OSU18).